The following is a 423-amino-acid chain: Enolase (423 aa).

Gln163 is a (2R)-2-phosphoglycerate binding site. Glu205 serves as the catalytic Proton donor. Mg(2+)-binding residues include Asp242, Glu285, and Asp312. Lys337, Arg366, Ser367, and Lys388 together coordinate (2R)-2-phosphoglycerate. Lys337 (proton acceptor) is an active-site residue.

This sequence belongs to the enolase family. Mg(2+) serves as cofactor.

The protein localises to the cytoplasm. Its subcellular location is the secreted. The protein resides in the cell surface. The catalysed reaction is (2R)-2-phosphoglycerate = phosphoenolpyruvate + H2O. The protein operates within carbohydrate degradation; glycolysis; pyruvate from D-glyceraldehyde 3-phosphate: step 4/5. Functionally, catalyzes the reversible conversion of 2-phosphoglycerate (2-PG) into phosphoenolpyruvate (PEP). It is essential for the degradation of carbohydrates via glycolysis. In Desulforapulum autotrophicum (strain ATCC 43914 / DSM 3382 / VKM B-1955 / HRM2) (Desulfobacterium autotrophicum), this protein is Enolase.